Reading from the N-terminus, the 191-residue chain is 3-hydroxyanthranilate 3,4-dioxygenase 2 (191 aa).

Position 48 (Arg-48) interacts with O2. Fe cation contacts are provided by His-52, Glu-73, and His-111. Substrate is bound at residue Glu-73. Arg-115 and Glu-125 together coordinate substrate.

The protein belongs to the 3-HAO family. Fe(2+) serves as cofactor.

It localises to the cytoplasm. The catalysed reaction is 3-hydroxyanthranilate + O2 = (2Z,4Z)-2-amino-3-carboxymuconate 6-semialdehyde. Its pathway is cofactor biosynthesis; NAD(+) biosynthesis; quinolinate from L-kynurenine: step 3/3. Its function is as follows. Catalyzes the oxidative ring opening of 3-hydroxyanthranilate to 2-amino-3-carboxymuconate semialdehyde, which spontaneously cyclizes to quinolinate. The sequence is that of 3-hydroxyanthranilate 3,4-dioxygenase 2 (bna1-2) from Aspergillus clavatus (strain ATCC 1007 / CBS 513.65 / DSM 816 / NCTC 3887 / NRRL 1 / QM 1276 / 107).